An 808-amino-acid polypeptide reads, in one-letter code: DNA replication licensing factor MCM3 (808 aa).

Residue Ala-2 is modified to N-acetylalanine. Phosphoserine occurs at positions 160 and 275. An N6-acetyllysine modification is found at Lys-293. The region spanning 295 to 502 (IFDQLARSLA…QDREISDHVL (208 aa)) is the MCM domain. Residues Gln-353, Leu-393, Glu-394, Ala-395, and Ala-397 each contribute to the ADP site. Positions 477–480 (SRFD) match the Arginine finger motif. Ala-523 provides a ligand contact to ATP. Position 535 is a phosphoserine; by ATM (Ser-535). Lys-547 is subject to N6-acetyllysine. Residue Ser-611 is modified to Phosphoserine. Residues 662–739 (KKRKKRSEDE…ETKESQKVEL (78 aa)) are disordered. Arg-664 is an ATP binding site. Residues Ser-668, Ser-672, and Ser-681 each carry the phosphoserine modification. Over residues 679–688 (EKSQEDQEQK) the composition is skewed to basic and acidic residues. At Tyr-708 the chain carries Phosphotyrosine. A phosphothreonine mark is found at Thr-713 and Thr-722. Residues 727 to 739 (DSQETKESQKVEL) are compositionally biased toward basic and acidic residues. Ser-728 and Ser-734 each carry phosphoserine.

It belongs to the MCM family. In terms of assembly, component of the MCM2-7 complex. The complex forms a toroidal hexameric ring with the proposed subunit order MCM2-MCM6-MCM4-MCM7-MCM3-MCM5. Component of the CMG helicase complex, a hexameric ring of related MCM2-7 subunits stabilized by CDC45 and the tetrameric GINS complex. Associated with the replication-specific DNA polymerase alpha. Interacts with MCMBP. Interacts with ANKRD17. Interacts with MCM3AP isoform MCM3AP; this interaction leads to MCM3 acetylation. Acetylated by MCM3AP. Post-translationally, O-glycosylated (O-GlcNAcylated), in a cell cycle-dependent manner.

Its subcellular location is the nucleus. The protein localises to the chromosome. It catalyses the reaction ATP + H2O = ADP + phosphate + H(+). Its function is as follows. Acts as a component of the MCM2-7 complex (MCM complex) which is the replicative helicase essential for 'once per cell cycle' DNA replication initiation and elongation in eukaryotic cells. Core component of CDC45-MCM-GINS (CMG) helicase, the molecular machine that unwinds template DNA during replication, and around which the replisome is built. The active ATPase sites in the MCM2-7 ring are formed through the interaction surfaces of two neighboring subunits such that a critical structure of a conserved arginine finger motif is provided in trans relative to the ATP-binding site of the Walker A box of the adjacent subunit. The six ATPase active sites, however, are likely to contribute differentially to the complex helicase activity. Required for the entry in S phase and for cell division. This is DNA replication licensing factor MCM3 (MCM3) from Bos taurus (Bovine).